The sequence spans 263 residues: uncharacterized protein (263 aa).

Positions 72–168 form a coiled coil; sequence LDKKETKELS…RTIVEIRNTK (97 aa). Residues 76-158 are disordered; the sequence is ETKELSKKEK…EKKEKKEKED (83 aa). A compositionally biased stretch (basic residues) spans 83–95; that stretch reads KEKKQLKKEKKAL. Residues 96-107 are compositionally biased toward basic and acidic residues; that stretch reads KKENKGGKDKKD. Over residues 108–121 the composition is skewed to basic residues; it reads KKDKKDKKDKKDKK. Basic and acidic residues-rich tracts occupy residues 122 to 131 and 139 to 158; these read DKKDKGDKKD and KHDDDKSEVKEKKEKKEKED.

This is an uncharacterized protein from Dictyostelium discoideum (Social amoeba).